Consider the following 1358-residue polypeptide: Regulatory protein SIR4 (1358 aa).

The segment covering 1 to 15 (MPNDNKTPNRSSTPK) has biased composition (polar residues). 7 disordered regions span residues 1-98 (MPND…PHSN), 252-277 (SLSVPKVSAGDSGISPEESKARSPGI), 356-466 (HDEK…PPEI), 498-544 (VQGE…ISNG), 677-726 (ASTE…EDEQ), 752-787 (VSDSDDSSSDNDSLTDLESLSSGESNEIKVTNDLDT), and 913-970 (HSQE…ENLS). The span at 26-39 (KIPEREEKSNEVKT) shows a compositional bias: basic and acidic residues. Composition is skewed to polar residues over residues 49–66 (KSKNYSRPSTAIHTSPHQ) and 75–96 (HKQLQQPKSSPLKKNNYNSFPH). A compositionally biased stretch (basic and acidic residues) spans 373 to 388 (QKMKEDADLKRMEILK). A compositionally biased stretch (polar residues) spans 428 to 437 (QENNYNSTSR). The segment covering 452–464 (KNGENKKIGKRPP) has biased composition (basic and acidic residues). The span at 507–517 (RNNTLNVTPSK) shows a compositional bias: polar residues. Ser-692 carries the post-translational modification Phosphoserine. Over residues 706-720 (FPVSLSQPSKKSFAN) the composition is skewed to polar residues. Over residues 754–766 (DSDDSSSDNDSLT) the composition is skewed to acidic residues. Residues 777-787 (NEIKVTNDLDT) are compositionally biased toward basic and acidic residues. Residues 916–932 (EQNSSSAKPSQIPTVSS) show a composition bias toward polar residues. Residue Lys-1128 forms a Glycyl lysine isopeptide (Lys-Gly) (interchain with G-Cter in SUMO) linkage. The stretch at 1271–1347 (LSFVDIVLSK…DAKINKLMEK (77 aa)) forms a coiled coil.

As to quaternary structure, homodimer. Interacts with MPS3. Interacts with RIS1. Interacts with SIR1, SIR2 and SIR3. Interacts with YKU80. Interacts with UBP10. Interacts with RAP1 (via C-terminus).

Its subcellular location is the nucleus. In terms of biological role, the proteins SIR1 through SIR4 are required for transcriptional repression of the silent mating type loci, HML and HMR. The proteins SIR2 through SIR4 repress mulitple loci by modulating chromatin structure. Involves the compaction of chromatin fiber into a more condensed form. The chain is Regulatory protein SIR4 (SIR4) from Saccharomyces cerevisiae (strain ATCC 204508 / S288c) (Baker's yeast).